We begin with the raw amino-acid sequence, 327 residues long: Protein MRG2 (327 aa).

The interval 1 to 40 is disordered; that stretch reads MGSPNAAAETDLTTDDFIGDTRRDSGSDTETNTDCDGEDL. The region spanning 52–101 is the Tudor-knot domain; that stretch reads FEEGERVLAKHSDCFYEAKVLKVEFKDNEWKYFVHYIGWNKSWDEWIRLD. Positions 133-156 are disordered; the sequence is SKMKPRSPNVARGRKRKQDSVDTE. An MRG domain is found at 162 to 327; sequence SDNLLSFNIP…AVEEMEKKEG (166 aa).

As to quaternary structure, interacts with HAM1 and HAM2. Interacts (via MRG domain) with CO. Component of the NuA4 histone acetyltransferase complex. In terms of tissue distribution, ubiquitous. Mainly expressed in the vasculature of cotyledons and leaves, and in roots and inflorescences.

The protein localises to the nucleus. Functionally, chromatin remodeling factor. Acts as a 'reader' protein by binding to H3K4me3 and H3K36me3 to control histone H4 acetylation. Increases the transcriptional levels of the flowering time genes FLC and FT. Binds the chromatin at the FT promoter upon interaction with CO. The protein is Protein MRG2 of Arabidopsis thaliana (Mouse-ear cress).